The primary structure comprises 1005 residues: Probable histidine kinase 4 (1005 aa).

Residues 1–37 (MGVGGGGGGGGGEAAAAVAVEGDEAGKGRRWWRVKVK) lie on the Cytoplasmic side of the membrane. The chain crosses the membrane as a helical span at residues 38-58 (LSTVAVVAWVLASAALWAGLH). Over 59 to 333 (WRFRRAALHK…YRNKLHVSWS (275 aa)) the chain is Extracellular. The CHASE domain maps to 110–321 (HPPALDQDTF…GDPLRKHQMV (212 aa)). Residues 334-354 (AITTPSGVFVICMLVGYIIYA) traverse the membrane as a helical segment. Residues 355–1005 (AWSRYDNVKE…QKFLGPCVSS (651 aa)) lie on the Cytoplasmic side of the membrane. A Histidine kinase domain is found at 389–675 (TVSHEIRTPM…TFTFTAVLRR (287 aa)). Phosphohistidine; by autocatalysis is present on His-392. Response regulatory domains follow at residues 700 to 829 (SALL…FQAL) and 862 to 999 (NILV…QKFL). 4-aspartylphosphate is present on Asp-912.

In terms of processing, activation probably requires a transfer of a phosphate group between a His in the transmitter domain and an Asp of the receiver domain. Highly expressed in young leaves and spikelets, and at lower levels in roots, mature leaves and stems.

It localises to the cell membrane. The enzyme catalyses ATP + protein L-histidine = ADP + protein N-phospho-L-histidine.. Its function is as follows. Cytokinin receptor related to bacterial two-component regulators. Functions as a histidine kinase and transmits the stress signal to a downstream MAPK cascade. This Oryza sativa subsp. japonica (Rice) protein is Probable histidine kinase 4.